The sequence spans 105 residues: MKMIRAIIRPEKSEEVADALDDAGFPALTKIDVIGRGKQKGIRFDEIYYDEIPKTMMLIVVDDADAERVVLVISESGYTGKIGDGKIFISPVENAYTVRTREEGL.

Belongs to the P(II) protein family.

Functionally, could be involved in the regulation of nitrogen fixation. This Methanothermobacter marburgensis (strain ATCC BAA-927 / DSM 2133 / JCM 14651 / NBRC 100331 / OCM 82 / Marburg) (Methanobacterium thermoautotrophicum) protein is Nitrogen fixation nifHD region GlnB-like protein 1 (glnBA).